The sequence spans 181 residues: Peptidyl-tRNA hydrolase (181 aa).

Y14 contacts tRNA. H19 serves as the catalytic Proton acceptor. The tRNA site is built by Y62, N64, and N108.

It belongs to the PTH family. In terms of assembly, monomer.

The protein localises to the cytoplasm. The catalysed reaction is an N-acyl-L-alpha-aminoacyl-tRNA + H2O = an N-acyl-L-amino acid + a tRNA + H(+). Functionally, hydrolyzes ribosome-free peptidyl-tRNAs (with 1 or more amino acids incorporated), which drop off the ribosome during protein synthesis, or as a result of ribosome stalling. Its function is as follows. Catalyzes the release of premature peptidyl moieties from peptidyl-tRNA molecules trapped in stalled 50S ribosomal subunits, and thus maintains levels of free tRNAs and 50S ribosomes. The protein is Peptidyl-tRNA hydrolase of Campylobacter jejuni subsp. jejuni serotype O:2 (strain ATCC 700819 / NCTC 11168).